The following is a 184-amino-acid chain: ATP synthase subunit b, chloroplastic (184 aa).

A helical membrane pass occupies residues 27–49; it reads LATNLINLSVVIGVLIFFGKGVL.

The protein belongs to the ATPase B chain family. F-type ATPases have 2 components, F(1) - the catalytic core - and F(0) - the membrane proton channel. F(1) has five subunits: alpha(3), beta(3), gamma(1), delta(1), epsilon(1). F(0) has four main subunits: a(1), b(1), b'(1) and c(10-14). The alpha and beta chains form an alternating ring which encloses part of the gamma chain. F(1) is attached to F(0) by a central stalk formed by the gamma and epsilon chains, while a peripheral stalk is formed by the delta, b and b' chains.

It is found in the plastid. The protein resides in the chloroplast thylakoid membrane. F(1)F(0) ATP synthase produces ATP from ADP in the presence of a proton or sodium gradient. F-type ATPases consist of two structural domains, F(1) containing the extramembraneous catalytic core and F(0) containing the membrane proton channel, linked together by a central stalk and a peripheral stalk. During catalysis, ATP synthesis in the catalytic domain of F(1) is coupled via a rotary mechanism of the central stalk subunits to proton translocation. In terms of biological role, component of the F(0) channel, it forms part of the peripheral stalk, linking F(1) to F(0). This is ATP synthase subunit b, chloroplastic from Jasminum nudiflorum (Winter jasmine).